The primary structure comprises 168 residues: Photosystem I assembly protein Ycf3 (168 aa).

3 TPR repeats span residues 35–68 (AFTYYRDGMSAQSEGNYAEALQNYYEAMRLEIDP), 72–105 (SYILYNIGLIHTSNGEHTKALEYYFRALERNPFL), and 120–153 (GEQAIRQGDSEIAEAWFDQAAEYWKQAIALTPGN).

The protein belongs to the Ycf3 family.

It is found in the plastid. The protein resides in the chloroplast thylakoid membrane. Its function is as follows. Essential for the assembly of the photosystem I (PSI) complex. May act as a chaperone-like factor to guide the assembly of the PSI subunits. In Gossypium barbadense (Sea Island cotton), this protein is Photosystem I assembly protein Ycf3.